Reading from the N-terminus, the 162-residue chain is Calcium vector protein (162 aa).

Ala2 bears the N-acetylalanine mark. 4 consecutive EF-hand domains span residues 12 to 47 (EEKD…LGQT), 49 to 84 (TKRE…KWVR), 86 to 121 (DDEE…VGEE), and 123 to 158 (LTDA…SKNA). Lys96 carries the N6,N6,N6-trimethyllysine modification. Residues Asp99, Asn101, Asp103, and Glu110 each contribute to the Ca(2+) site. N6,N6,N6-trimethyllysine is present on Lys117. 4 residues coordinate Ca(2+): Asp136, Asp138, Asn140, and Glu147.

The protein localises to the cytoplasm. Functionally, the exact function of this protein is not yet known. It interacts with CAVPT, a protein also of unknown function, in a calcium-dependent way. This protein binds two calcium ions. The polypeptide is Calcium vector protein (Branchiostoma lanceolatum (Common lancelet)).